The sequence spans 767 residues: Protein SQS1 (767 aa).

Residues 1-17 (MAKRHSHYQGSRRRHAR) are compositionally biased toward basic residues. The tract at residues 1–60 (MAKRHSHYQGSRRRHARGSNSKKAGRGNAKGIQGRKIKKKPTPTNSWHNSSIPLGEGDLD) is disordered. Polar residues predominate over residues 42–52 (TPTNSWHNSSI). At Ser-105 the chain carries Phosphoserine. A compositionally biased stretch (acidic residues) spans 176–185 (EDSENEDDDS). Positions 176–200 (EDSENEDDDSQNSPSTDHSLSSNES) are disordered. Ser-217, Ser-255, Ser-334, Ser-343, and Ser-345 each carry phosphoserine. Residues 466–493 (YSDIPISDSSDEGDSYEGDSYEDDEDMA) are disordered. The span at 474 to 492 (SSDEGDSYEGDSYEDDEDM) shows a compositional bias: acidic residues. The R3H domain maps to 594–656 (GLHIQNIKDE…HTSVVVEKIK (63 aa)). A G-patch domain is found at 720-767 (NENIGRRMLEKLGWKSGEGLGIQGNKGISEPIFAKIKKNRSGLRHSES).

Belongs to the SQS1 family.

The protein resides in the cytoplasm. The protein localises to the nucleus. May be involved in splicing since overexpression antagonizes the suppression of splicing defects by SPP382 mutants. This is Protein SQS1 (SQS1) from Saccharomyces cerevisiae (strain YJM789) (Baker's yeast).